The primary structure comprises 228 residues: D-lyxose/D-mannose isomerase (228 aa).

Residues H103, H105, E110, and H171 each contribute to the Mn(2+) site.

It belongs to the D-lyxose ketol-isomerase family. As to quaternary structure, homodimer. Requires Mn(2+) as cofactor.

It catalyses the reaction D-lyxose = D-xylulose. The catalysed reaction is D-mannose = D-fructose. In terms of biological role, sugar isomerase that catalyzes the reversible isomerization of D-lyxose to D-xylulose, and D-mannose to D-fructose. Shows optimum activity using D-lyxose as substrate, but can also effectively catalyze the isomerization between D-fructose and D-mannose. Shows lower activity with L-gulose, D-talose and L-ribose. The sequence is that of D-lyxose/D-mannose isomerase from Serratia proteamaculans.